The chain runs to 291 residues: tRNA dimethylallyltransferase (291 aa).

Residue 9–16 (GPTASGKT) participates in ATP binding. 11 to 16 (TASGKT) serves as a coordination point for substrate. The tract at residues 34 to 37 (DSLQ) is interaction with substrate tRNA.

This sequence belongs to the IPP transferase family. Monomer. Mg(2+) is required as a cofactor.

The catalysed reaction is adenosine(37) in tRNA + dimethylallyl diphosphate = N(6)-dimethylallyladenosine(37) in tRNA + diphosphate. Functionally, catalyzes the transfer of a dimethylallyl group onto the adenine at position 37 in tRNAs that read codons beginning with uridine, leading to the formation of N6-(dimethylallyl)adenosine (i(6)A). The polypeptide is tRNA dimethylallyltransferase (Onion yellows phytoplasma (strain OY-M)).